The primary structure comprises 220 residues: Probable GTP-binding protein EngB (220 aa).

The 177-residue stretch at 23-199 (SVREVAFAGR…ERVLASWLDI (177 aa)) folds into the EngB-type G domain. The Mg(2+) site is built by serine 38 and threonine 60.

This sequence belongs to the TRAFAC class TrmE-Era-EngA-EngB-Septin-like GTPase superfamily. EngB GTPase family. Mg(2+) serves as cofactor.

Functionally, necessary for normal cell division and for the maintenance of normal septation. The chain is Probable GTP-binding protein EngB from Dechloromonas aromatica (strain RCB).